The following is an 848-amino-acid chain: Xylosyltransferase (848 aa).

The Cytoplasmic segment spans residues 1 to 14 (MSLHRTLRRFLRKW). Residues 15–35 (KALVYAVSFILLIQAFFTFQS) traverse the membrane as a helical; Signal-anchor for type II membrane protein segment. The Lumenal portion of the chain corresponds to 36–843 (SPNLMEEEHL…PKTELISVKP (808 aa)). 4 disulfide bridges follow: Cys-145-Cys-173, Cys-189-Cys-427, Cys-446-Cys-459, and Cys-448-Cys-457. UDP-alpha-D-xylose contacts are provided by residues Val-219, Asp-247, and 276–278 (TIW). Asn-306 carries an N-linked (GlcNAc...) asparagine glycan. A UDP-alpha-D-xylose-binding site is contributed by 379–380 (DW). Residues Ser-460 and 482–483 (RK) contribute to the UDP-alpha-D-xylose site. 2 disulfide bridges follow: Cys-529–Cys-811 and Cys-794–Cys-822. A glycan (N-linked (GlcNAc...) asparagine) is linked at Asn-530. The segment at 824–848 (NTNWSSLSPDPKTELISVKPDGRIR) is disordered. N-linked (GlcNAc...) asparagine glycosylation is present at Asn-826.

This sequence belongs to the glycosyltransferase 14 family. XylT subfamily. Requires a divalent metal cation as cofactor.

The protein resides in the endoplasmic reticulum membrane. The protein localises to the golgi apparatus membrane. It carries out the reaction UDP-alpha-D-xylose + L-seryl-[protein] = 3-O-(beta-D-xylosyl)-L-seryl-[protein] + UDP + H(+). It participates in glycan metabolism; chondroitin sulfate biosynthesis. It functions in the pathway glycan metabolism; heparan sulfate biosynthesis. In terms of biological role, catalyzes the first step in biosynthesis of glycosaminoglycan. Transfers D-xylose from UDP-D-xylose to specific serine residues of the core protein. Initial enzyme in the biosynthesis of chondroitin sulfate and dermatan sulfate proteoglycans in fibroblasts and chondrocytes. The chain is Xylosyltransferase (xt) from Ciona intestinalis (Transparent sea squirt).